Here is a 501-residue protein sequence, read N- to C-terminus: Lysine--tRNA ligase (501 aa).

Residues glutamate 411 and glutamate 418 each contribute to the Mg(2+) site.

The protein belongs to the class-II aminoacyl-tRNA synthetase family. Homodimer. The cofactor is Mg(2+).

It localises to the cytoplasm. It carries out the reaction tRNA(Lys) + L-lysine + ATP = L-lysyl-tRNA(Lys) + AMP + diphosphate. This is Lysine--tRNA ligase from Pseudomonas aeruginosa (strain LESB58).